A 362-amino-acid chain; its full sequence is Phosphoserine aminotransferase (362 aa).

Arg-43 serves as a coordination point for L-glutamate. Pyridoxal 5'-phosphate contacts are provided by residues 77 to 78 (AS), Trp-103, Thr-153, Asp-173, and Gln-196. Lys-197 bears the N6-(pyridoxal phosphate)lysine mark. 238 to 239 (NT) serves as a coordination point for pyridoxal 5'-phosphate.

Belongs to the class-V pyridoxal-phosphate-dependent aminotransferase family. SerC subfamily. In terms of assembly, homodimer. The cofactor is pyridoxal 5'-phosphate.

The protein localises to the cytoplasm. The catalysed reaction is O-phospho-L-serine + 2-oxoglutarate = 3-phosphooxypyruvate + L-glutamate. The enzyme catalyses 4-(phosphooxy)-L-threonine + 2-oxoglutarate = (R)-3-hydroxy-2-oxo-4-phosphooxybutanoate + L-glutamate. It functions in the pathway amino-acid biosynthesis; L-serine biosynthesis; L-serine from 3-phospho-D-glycerate: step 2/3. Its function is as follows. Catalyzes the reversible conversion of 3-phosphohydroxypyruvate to phosphoserine and of 3-hydroxy-2-oxo-4-phosphonooxybutanoate to phosphohydroxythreonine. This chain is Phosphoserine aminotransferase, found in Lysinibacillus sphaericus (strain C3-41).